The primary structure comprises 793 residues: Acetyl-CoA decarbonylase/synthase complex subunit alpha (793 aa).

Residues Cys55, Cys58, Cys63, and Cys73 each coordinate [4Fe-4S] cluster. CO is bound at residue His96. [Ni-4Fe-4S] cluster contacts are provided by His229, Cys257, and Cys309. 4Fe-4S ferredoxin-type domains lie at 393–422 (EQQF…ISEM) and 432–461 (EPFS…LKLY). [4Fe-4S] cluster is bound by residues Cys403, Cys406, Cys409, Cys413, Cys441, Cys444, Cys447, and Cys451. The [Ni-4Fe-4S] cluster site is built by Cys509, Cys538, and Cys573.

This sequence belongs to the Ni-containing carbon monoxide dehydrogenase family. As to quaternary structure, heterotetramer of two alpha and two epsilon subunits. The ACDS complex is made up of alpha, epsilon, beta, gamma and delta subunits with a probable stoichiometry of (alpha(2)epsilon(2))(4)-beta(8)-(gamma(1)delta(1))(8). Requires [4Fe-4S] cluster as cofactor. [Ni-4Fe-4S] cluster is required as a cofactor.

It catalyses the reaction CO + 2 oxidized [2Fe-2S]-[ferredoxin] + H2O = 2 reduced [2Fe-2S]-[ferredoxin] + CO2 + 2 H(+). Part of the ACDS complex that catalyzes the reversible cleavage of acetyl-CoA, allowing autotrophic growth from CO(2). The alpha-epsilon subcomponent functions as a carbon monoxide dehydrogenase. This chain is Acetyl-CoA decarbonylase/synthase complex subunit alpha, found in Methanothrix soehngenii (Methanosaeta concilii).